Reading from the N-terminus, the 290-residue chain is MKPPEHSLIIISGLSGSGKSIALKTFEDLDYYCSDNLPVELLPHFLRRRLRVAELSDQRIAIGIDIRSGSNLSELDQWRHTAKHYNIKAHLLFFDASNETLLKRYADTRRRHPLSHLGLSLPEAIALERELTAPLREAAEAVIDTSTFNVHQLRRHVVTEFALTHSDKLSLLFESFAYKRGIPTEADFVFDARILPNPHWKPELRSLTGRDSNVRDYMEQQPDVILYLTQITEFLDTWLARLQADTRSYVTVAFGCTGGKHRSVYLAEQMARHAREKGWSEVATFHRELE.

Residue 13–20 (GLSGSGKS) coordinates ATP. Residue 65–68 (DIRS) coordinates GTP.

The protein belongs to the RapZ-like family.

Functionally, displays ATPase and GTPase activities. The protein is Nucleotide-binding protein Xfasm12_0753 of Xylella fastidiosa (strain M12).